The primary structure comprises 329 residues: MSNLLVQVSKTGPSSVLQVITKEIPKPAPNGLVIKNAYAGLNYIDTYLRTGLYTAPLPYIPGKEAAGVVAAVGDKVEADFKVGDRVVYLTPFGAYAQYTNVPTTLVSKVSEKIPLKIASAALLQGLTAYTLIEEAYPVKTGDTVVVHAAAGGVGLLLCQMLRARNVHVIATASTAAKRRIAIKNGAEIACSYEDLTKVVADYTNGKGVDAAYDSVGIDTLSSSLDALRNGGTMVSFGNASGAIDAIPLKFLSARCLKFVRPSLFGYITGHAVFEGYVSRLWKEILDNNLNIAIHHIFKLSEAKEAHDAIESRATTGKLLLLCNEDLADA.

Serine 191 is modified (phosphoserine).

It belongs to the zinc-containing alcohol dehydrogenase family. Quinone oxidoreductase subfamily.

It localises to the cytoplasm. It is found in the nucleus. It carries out the reaction 2 a quinone + NADPH + H(+) = 2 a 1,4-benzosemiquinone + NADP(+). In Schizosaccharomyces pombe (strain 972 / ATCC 24843) (Fission yeast), this protein is Probable quinone oxidoreductase (zta1).